Here is a 127-residue protein sequence, read N- to C-terminus: Large ribosomal subunit protein bL17 (127 aa).

It belongs to the bacterial ribosomal protein bL17 family. In terms of assembly, part of the 50S ribosomal subunit. Contacts protein L32.

The polypeptide is Large ribosomal subunit protein bL17 (Stenotrophomonas maltophilia (strain R551-3)).